The primary structure comprises 407 residues: Imidazolonepropionase (407 aa).

Residues histidine 68 and histidine 70 each contribute to the Fe(3+) site. Zn(2+) is bound by residues histidine 68 and histidine 70. Residues arginine 77, tyrosine 140, and histidine 173 each contribute to the 4-imidazolone-5-propanoate site. Residue tyrosine 140 participates in N-formimidoyl-L-glutamate binding. Residue histidine 238 coordinates Fe(3+). Position 238 (histidine 238) interacts with Zn(2+). Glutamine 241 is a binding site for 4-imidazolone-5-propanoate. Fe(3+) is bound at residue aspartate 313. Aspartate 313 lines the Zn(2+) pocket. N-formimidoyl-L-glutamate contacts are provided by asparagine 315 and glycine 317. Threonine 318 provides a ligand contact to 4-imidazolone-5-propanoate.

The protein belongs to the metallo-dependent hydrolases superfamily. HutI family. It depends on Zn(2+) as a cofactor. Fe(3+) serves as cofactor.

The protein resides in the cytoplasm. The catalysed reaction is 4-imidazolone-5-propanoate + H2O = N-formimidoyl-L-glutamate. It participates in amino-acid degradation; L-histidine degradation into L-glutamate; N-formimidoyl-L-glutamate from L-histidine: step 3/3. In terms of biological role, catalyzes the hydrolytic cleavage of the carbon-nitrogen bond in imidazolone-5-propanoate to yield N-formimidoyl-L-glutamate. It is the third step in the universal histidine degradation pathway. The polypeptide is Imidazolonepropionase (Burkholderia lata (strain ATCC 17760 / DSM 23089 / LMG 22485 / NCIMB 9086 / R18194 / 383)).